A 451-amino-acid polypeptide reads, in one-letter code: Bifunctional protein GlmU (451 aa).

Positions 1–225 (MVVVAILAAG…YQEILGINDR (225 aa)) are pyrophosphorylase. Residues 7-10 (LAAG), Lys-21, Gln-72, and 77-78 (GT) each bind UDP-N-acetyl-alpha-D-glucosamine. Asp-102 lines the Mg(2+) pocket. Positions 139, 154, 169, and 223 each coordinate UDP-N-acetyl-alpha-D-glucosamine. Mg(2+) is bound at residue Asn-223. Residues 226 to 246 (LQLATAYEILQRRVKEQWMMA) form a linker region. The tract at residues 247 to 451 (GVTLIDPNSI…LGWRRKSGES (205 aa)) is N-acetyltransferase. Residues Arg-328 and Lys-346 each contribute to the UDP-N-acetyl-alpha-D-glucosamine site. The active-site Proton acceptor is the His-358. Residues Tyr-361 and Asn-372 each contribute to the UDP-N-acetyl-alpha-D-glucosamine site. Acetyl-CoA is bound by residues Ala-375, 381–382 (NY), Ser-400, Ala-418, and Arg-435.

In the N-terminal section; belongs to the N-acetylglucosamine-1-phosphate uridyltransferase family. It in the C-terminal section; belongs to the transferase hexapeptide repeat family. As to quaternary structure, homotrimer. Mg(2+) is required as a cofactor.

The protein localises to the cytoplasm. It catalyses the reaction alpha-D-glucosamine 1-phosphate + acetyl-CoA = N-acetyl-alpha-D-glucosamine 1-phosphate + CoA + H(+). The catalysed reaction is N-acetyl-alpha-D-glucosamine 1-phosphate + UTP + H(+) = UDP-N-acetyl-alpha-D-glucosamine + diphosphate. Its pathway is nucleotide-sugar biosynthesis; UDP-N-acetyl-alpha-D-glucosamine biosynthesis; N-acetyl-alpha-D-glucosamine 1-phosphate from alpha-D-glucosamine 6-phosphate (route II): step 2/2. It functions in the pathway nucleotide-sugar biosynthesis; UDP-N-acetyl-alpha-D-glucosamine biosynthesis; UDP-N-acetyl-alpha-D-glucosamine from N-acetyl-alpha-D-glucosamine 1-phosphate: step 1/1. The protein operates within bacterial outer membrane biogenesis; LPS lipid A biosynthesis. Its function is as follows. Catalyzes the last two sequential reactions in the de novo biosynthetic pathway for UDP-N-acetylglucosamine (UDP-GlcNAc). The C-terminal domain catalyzes the transfer of acetyl group from acetyl coenzyme A to glucosamine-1-phosphate (GlcN-1-P) to produce N-acetylglucosamine-1-phosphate (GlcNAc-1-P), which is converted into UDP-GlcNAc by the transfer of uridine 5-monophosphate (from uridine 5-triphosphate), a reaction catalyzed by the N-terminal domain. The chain is Bifunctional protein GlmU from Nostoc sp. (strain PCC 7120 / SAG 25.82 / UTEX 2576).